Reading from the N-terminus, the 434-residue chain is Isocitrate lyase (434 aa).

91 to 93 is a binding site for substrate; that stretch reads SGW. Aspartate 157 contacts Mg(2+). The Proton acceptor role is filled by cysteine 195. Substrate contacts are provided by residues 196–197, arginine 232, 317–321, and threonine 351; these read GH and NCSPS.

The protein belongs to the isocitrate lyase/PEP mutase superfamily. Isocitrate lyase family. As to quaternary structure, homotetramer. Mg(2+) serves as cofactor.

It carries out the reaction D-threo-isocitrate = glyoxylate + succinate. The protein operates within carbohydrate metabolism; glyoxylate cycle; (S)-malate from isocitrate: step 1/2. Involved in the metabolic adaptation in response to environmental changes. Catalyzes the reversible formation of succinate and glyoxylate from isocitrate, a key step of the glyoxylate cycle, which operates as an anaplerotic route for replenishing the tricarboxylic acid cycle during growth on fatty acid substrates. The polypeptide is Isocitrate lyase (aceA) (Salmonella typhimurium (strain LT2 / SGSC1412 / ATCC 700720)).